The sequence spans 84 residues: Toxin Cex12 (84 aa).

The first 19 residues, 1 to 19 (MNSLLMITTCLILVGTVWA), serve as a signal peptide directing secretion. Residues 20–83 (NDGYLFDKRK…ISRTPGKTCR (64 aa)) form the LCN-type CS-alpha/beta domain. 4 disulfides stabilise this stretch: Cys31/Cys82, Cys35/Cys58, Cys44/Cys63, and Cys48/Cys65.

It belongs to the long (4 C-C) scorpion toxin superfamily. Sodium channel inhibitor family. Beta subfamily. As to expression, expressed by the venom gland.

The protein resides in the secreted. Its function is as follows. Beta toxins bind voltage-independently at site-4 of sodium channels (Nav) and shift the voltage of activation toward more negative potentials thereby affecting sodium channel activation and promoting spontaneous and repetitive firing. This chain is Toxin Cex12, found in Centruroides exilicauda (Bark scorpion).